A 198-amino-acid chain; its full sequence is RNA-free ribonuclease P (198 aa).

It belongs to the HARP family.

The enzyme catalyses Endonucleolytic cleavage of RNA, removing 5'-extranucleotides from tRNA precursor.. Its function is as follows. RNA-free RNase P that catalyzes the removal of the 5'-leader sequence from pre-tRNA to produce the mature 5'-terminus. The sequence is that of RNA-free ribonuclease P from Thermococcus kodakarensis (strain ATCC BAA-918 / JCM 12380 / KOD1) (Pyrococcus kodakaraensis (strain KOD1)).